The sequence spans 589 residues: ATP-dependent lipid A-core flippase (589 aa).

Transmembrane regions (helical) follow at residues 33 to 53 (VLAIVCMVLAAAGQAAFAWII), 70 to 90 (LWVPATLVGIFLFHGVTTFAS), 148 to 168 (VVVLVRDTFTVIFLLAYMTYL), 170 to 190 (GWLVMIVFGLGPLVAVVVTAA), 262 to 282 (LGAVIALAIILYLATMDVILE), and 283 to 303 (TISPGGMISFIAAMLLMLPPL). The region spanning 33-315 (VLAIVCMVLA…VIGVNAEIQK (283 aa)) is the ABC transmembrane type-1 domain. The 237-residue stretch at 347–583 (IEFDRVAFRY…NGHYASLHRV (237 aa)) folds into the ABC transporter domain. 381–388 (GRSGSGKT) serves as a coordination point for ATP.

The protein belongs to the ABC transporter superfamily. Lipid exporter (TC 3.A.1.106) family. In terms of assembly, homodimer.

It localises to the cell inner membrane. It carries out the reaction ATP + H2O + lipid A-core oligosaccharideSide 1 = ADP + phosphate + lipid A-core oligosaccharideSide 2.. In terms of biological role, involved in lipopolysaccharide (LPS) biosynthesis. Translocates lipid A-core from the inner to the outer leaflet of the inner membrane. Transmembrane domains (TMD) form a pore in the inner membrane and the ATP-binding domain (NBD) is responsible for energy generation. The sequence is that of ATP-dependent lipid A-core flippase from Alkalilimnicola ehrlichii (strain ATCC BAA-1101 / DSM 17681 / MLHE-1).